Here is a 293-residue protein sequence, read N- to C-terminus: 33 kDa chaperonin (293 aa).

2 disulfides stabilise this stretch: Cys-230–Cys-232 and Cys-263–Cys-266.

This sequence belongs to the HSP33 family. In terms of processing, under oxidizing conditions two disulfide bonds are formed involving the reactive cysteines. Under reducing conditions zinc is bound to the reactive cysteines and the protein is inactive.

It localises to the cytoplasm. Redox regulated molecular chaperone. Protects both thermally unfolding and oxidatively damaged proteins from irreversible aggregation. Plays an important role in the bacterial defense system toward oxidative stress. The sequence is that of 33 kDa chaperonin from Edwardsiella ictaluri (strain 93-146).